Here is a 136-residue protein sequence, read N- to C-terminus: DNA-directed RNA polymerase subunit omega (136 aa).

A disordered region spans residues 79-107 (EPEAETVPLLSSSPAAAAVAPQSSSDDAA). A compositionally biased stretch (low complexity) spans 89–107 (SSSPAAAAVAPQSSSDDAA).

This sequence belongs to the RNA polymerase subunit omega family. In terms of assembly, the RNAP catalytic core consists of 2 alpha, 1 beta, 1 beta' and 1 omega subunit. When a sigma factor is associated with the core the holoenzyme is formed, which can initiate transcription.

It catalyses the reaction RNA(n) + a ribonucleoside 5'-triphosphate = RNA(n+1) + diphosphate. In terms of biological role, promotes RNA polymerase assembly. Latches the N- and C-terminal regions of the beta' subunit thereby facilitating its interaction with the beta and alpha subunits. The protein is DNA-directed RNA polymerase subunit omega of Methylobacterium radiotolerans (strain ATCC 27329 / DSM 1819 / JCM 2831 / NBRC 15690 / NCIMB 10815 / 0-1).